A 364-amino-acid chain; its full sequence is tRNA N6-adenosine threonylcarbamoyltransferase (364 aa).

The Fe cation site is built by His-115 and His-119. Substrate contacts are provided by residues 137 to 141, Asp-170, Gly-183, and Asn-288; that span reads LVSGG. A Fe cation-binding site is contributed by Asp-316.

This sequence belongs to the KAE1 / TsaD family. Fe(2+) serves as cofactor.

Its subcellular location is the cytoplasm. The enzyme catalyses L-threonylcarbamoyladenylate + adenosine(37) in tRNA = N(6)-L-threonylcarbamoyladenosine(37) in tRNA + AMP + H(+). Its function is as follows. Required for the formation of a threonylcarbamoyl group on adenosine at position 37 (t(6)A37) in tRNAs that read codons beginning with adenine. Is involved in the transfer of the threonylcarbamoyl moiety of threonylcarbamoyl-AMP (TC-AMP) to the N6 group of A37, together with TsaE and TsaB. TsaD likely plays a direct catalytic role in this reaction. The chain is tRNA N6-adenosine threonylcarbamoyltransferase from Bartonella bacilliformis (strain ATCC 35685 / KC583 / Herrer 020/F12,63).